A 56-amino-acid polypeptide reads, in one-letter code: Ovomucoid (56 aa).

One can recognise a Kazal-like domain in the interval valine 6–cysteine 56. Disulfide bonds link cysteine 8–cysteine 38, cysteine 16–cysteine 35, and cysteine 24–cysteine 56. Asparagine 45 carries N-linked (GlcNAc...) asparagine glycosylation.

It localises to the secreted. The sequence is that of Ovomucoid from Penelope jacquacu (Spix's guan).